The primary structure comprises 78 residues: Acyl carrier protein (78 aa).

The Carrier domain occupies 2–77 (SDIEQRVKQA…SAIDYVTKKL (76 aa)). O-(pantetheine 4'-phosphoryl)serine is present on Ser-37.

Belongs to the acyl carrier protein (ACP) family. In terms of processing, 4'-phosphopantetheine is transferred from CoA to a specific serine of apo-ACP by AcpS. This modification is essential for activity because fatty acids are bound in thioester linkage to the sulfhydryl of the prosthetic group.

The protein resides in the cytoplasm. The protein operates within lipid metabolism; fatty acid biosynthesis. Carrier of the growing fatty acid chain in fatty acid biosynthesis. This is Acyl carrier protein from Acinetobacter baumannii (strain AB307-0294).